Here is a 119-residue protein sequence, read N- to C-terminus: Ribonuclease P protein component (119 aa).

It belongs to the RnpA family. Consists of a catalytic RNA component (M1 or rnpB) and a protein subunit.

The enzyme catalyses Endonucleolytic cleavage of RNA, removing 5'-extranucleotides from tRNA precursor.. RNaseP catalyzes the removal of the 5'-leader sequence from pre-tRNA to produce the mature 5'-terminus. It can also cleave other RNA substrates such as 4.5S RNA. The protein component plays an auxiliary but essential role in vivo by binding to the 5'-leader sequence and broadening the substrate specificity of the ribozyme. The chain is Ribonuclease P protein component from Erwinia tasmaniensis (strain DSM 17950 / CFBP 7177 / CIP 109463 / NCPPB 4357 / Et1/99).